Reading from the N-terminus, the 212-residue chain is Root-specific lectin (212 aa).

An N-terminal signal peptide occupies residues 1–26; that stretch reads MKMMSTRALALGAAAVLAFAAATAHA. Residue Gln27 is modified to Pyrrolidone carboxylic acid. Chitin-binding type-1 domains are found at residues 27–68, 69–111, 112–154, and 155–197; these read QRCG…ACYT, SKRC…PCRA, DIKC…ACST, and DKPC…GCDG. 16 disulfides stabilise this stretch: Cys29–Cys44, Cys38–Cys50, Cys43–Cys57, Cys61–Cys66, Cys72–Cys87, Cys81–Cys93, Cys86–Cys100, Cys104–Cys109, Cys115–Cys130, Cys124–Cys136, Cys129–Cys143, Cys147–Cys152, Cys158–Cys173, Cys167–Cys179, Cys172–Cys186, and Cys190–Cys195. Residue 36–38 coordinates substrate; it reads MEC. Position 88-99 (88-99) interacts with substrate; it reads SQWGYCGFGAEY. A substrate-binding site is contributed by 140–141; sequence SE. An N-linked (GlcNAc...) asparagine glycan is attached at Asn206.

As to expression, in roots.

Its function is as follows. Carbohydrate binding. The sequence is that of Root-specific lectin from Hordeum vulgare (Barley).